A 301-amino-acid polypeptide reads, in one-letter code: tRNA pseudouridine synthase B (301 aa).

The active-site Nucleophile is the D47.

This sequence belongs to the pseudouridine synthase TruB family. Type 1 subfamily.

It carries out the reaction uridine(55) in tRNA = pseudouridine(55) in tRNA. In terms of biological role, responsible for synthesis of pseudouridine from uracil-55 in the psi GC loop of transfer RNAs. The sequence is that of tRNA pseudouridine synthase B from Cereibacter sphaeroides (strain ATCC 17023 / DSM 158 / JCM 6121 / CCUG 31486 / LMG 2827 / NBRC 12203 / NCIMB 8253 / ATH 2.4.1.) (Rhodobacter sphaeroides).